Consider the following 619-residue polypeptide: Chaperone protein HscA homolog (619 aa).

This sequence belongs to the heat shock protein 70 family.

Functionally, chaperone involved in the maturation of iron-sulfur cluster-containing proteins. Has a low intrinsic ATPase activity which is markedly stimulated by HscB. The protein is Chaperone protein HscA homolog of Haemophilus influenzae (strain PittEE).